The sequence spans 105 residues: Translation initiation factor 1A (105 aa).

Positions 12–87 (TRVRTPREEN…QKCDIIWRYT (76 aa)) constitute an S1-like domain.

It belongs to the eIF-1A family.

In terms of biological role, seems to be required for maximal rate of protein biosynthesis. Enhances ribosome dissociation into subunits and stabilizes the binding of the initiator Met-tRNA(I) to 40 S ribosomal subunits. The polypeptide is Translation initiation factor 1A (eIF1A) (Methanococcus aeolicus (strain ATCC BAA-1280 / DSM 17508 / OCM 812 / Nankai-3)).